The following is a 101-amino-acid chain: Small ribosomal subunit protein uS14 (101 aa).

Residues 1–20 (MAKISAVERNKKRERLTKRD) form a disordered region.

This sequence belongs to the universal ribosomal protein uS14 family. Part of the 30S ribosomal subunit. Contacts proteins S3 and S10.

Binds 16S rRNA, required for the assembly of 30S particles and may also be responsible for determining the conformation of the 16S rRNA at the A site. In Rhodospirillum rubrum (strain ATCC 11170 / ATH 1.1.1 / DSM 467 / LMG 4362 / NCIMB 8255 / S1), this protein is Small ribosomal subunit protein uS14.